Here is a 147-residue protein sequence, read N- to C-terminus: Hemoglobin subunit gamma-2 (147 aa).

One can recognise a Globin domain in the interval 3–147 (HFTEEDKATI…VASALSSRYH (145 aa)). Position 13 is a phosphothreonine (Thr-13). Ser-45, Ser-51, and Ser-53 each carry phosphoserine. N6-acetyllysine is present on Lys-60. Position 64 (His-64) interacts with heme b. N6-acetyllysine is present on Lys-83. His-93 contributes to the heme b binding site. Cys-94 carries the S-nitrosocysteine modification. Phosphoserine occurs at positions 140, 143, and 144.

This sequence belongs to the globin family. Heterotetramer of two alpha chains and two gamma chains in fetal hemoglobin (Hb F). In terms of tissue distribution, red blood cells.

Its function is as follows. Gamma chains make up the fetal hemoglobin F, in combination with alpha chains. This Pongo pygmaeus (Bornean orangutan) protein is Hemoglobin subunit gamma-2 (HBG2).